A 307-amino-acid chain; its full sequence is Pseudouridine-5'-phosphate glycosidase (307 aa).

The active-site Proton donor is E28. Substrate is bound by residues K89 and V109. D141 lines the Mn(2+) pocket. 143-145 (SAD) provides a ligand contact to substrate. K162 serves as the catalytic Nucleophile.

This sequence belongs to the pseudouridine-5'-phosphate glycosidase family. In terms of assembly, homotrimer. Requires Mn(2+) as cofactor.

It carries out the reaction D-ribose 5-phosphate + uracil = psi-UMP + H2O. Its function is as follows. Catalyzes the reversible cleavage of pseudouridine 5'-phosphate (PsiMP) to ribose 5-phosphate and uracil. Functions biologically in the cleavage direction, as part of a pseudouridine degradation pathway. This chain is Pseudouridine-5'-phosphate glycosidase, found in Nocardioides sp. (strain ATCC BAA-499 / JS614).